The following is a 316-amino-acid chain: MKVLLANPRGFCAGVDRAIEIVKRTIDMLGTPIYVRHEVVHNRFVVDDLKQRGAIFVEELHQVPDGATVIFSAHGVSQAVRRQAAQRGLKVFDATCPLVTKVHLDVARHCRTGRDMILIGHAGHPEVEGTMGQWDQERGTGRIYLVENIDDVAALHVAQPHHLAYTTQTTLSVDDTRNIIDALRQRFPTIQGPKNNDICYATQNRQDAVRELARECDLVLVVGSPNSSNSNRLSELAQREGVASYLIDSAAEIDPAWVIDKHHIGVTAGASAPQVLVDGVLARLYELGATSVSEHSGKPESMVFALPKALRLQLVD.

[4Fe-4S] cluster is bound at residue cysteine 12. The (2E)-4-hydroxy-3-methylbut-2-enyl diphosphate site is built by histidine 41 and histidine 74. Dimethylallyl diphosphate contacts are provided by histidine 41 and histidine 74. Isopentenyl diphosphate-binding residues include histidine 41 and histidine 74. Cysteine 96 provides a ligand contact to [4Fe-4S] cluster. Histidine 124 provides a ligand contact to (2E)-4-hydroxy-3-methylbut-2-enyl diphosphate. Histidine 124 contributes to the dimethylallyl diphosphate binding site. Histidine 124 serves as a coordination point for isopentenyl diphosphate. Glutamate 126 functions as the Proton donor in the catalytic mechanism. Threonine 169 contacts (2E)-4-hydroxy-3-methylbut-2-enyl diphosphate. Cysteine 199 contacts [4Fe-4S] cluster. (2E)-4-hydroxy-3-methylbut-2-enyl diphosphate contacts are provided by serine 227, serine 228, asparagine 229, and serine 271. The dimethylallyl diphosphate site is built by serine 227, serine 228, asparagine 229, and serine 271. Residues serine 227, serine 228, asparagine 229, and serine 271 each coordinate isopentenyl diphosphate.

The protein belongs to the IspH family. It depends on [4Fe-4S] cluster as a cofactor.

The enzyme catalyses isopentenyl diphosphate + 2 oxidized [2Fe-2S]-[ferredoxin] + H2O = (2E)-4-hydroxy-3-methylbut-2-enyl diphosphate + 2 reduced [2Fe-2S]-[ferredoxin] + 2 H(+). It carries out the reaction dimethylallyl diphosphate + 2 oxidized [2Fe-2S]-[ferredoxin] + H2O = (2E)-4-hydroxy-3-methylbut-2-enyl diphosphate + 2 reduced [2Fe-2S]-[ferredoxin] + 2 H(+). It functions in the pathway isoprenoid biosynthesis; dimethylallyl diphosphate biosynthesis; dimethylallyl diphosphate from (2E)-4-hydroxy-3-methylbutenyl diphosphate: step 1/1. The protein operates within isoprenoid biosynthesis; isopentenyl diphosphate biosynthesis via DXP pathway; isopentenyl diphosphate from 1-deoxy-D-xylulose 5-phosphate: step 6/6. Functionally, catalyzes the conversion of 1-hydroxy-2-methyl-2-(E)-butenyl 4-diphosphate (HMBPP) into a mixture of isopentenyl diphosphate (IPP) and dimethylallyl diphosphate (DMAPP). Acts in the terminal step of the DOXP/MEP pathway for isoprenoid precursor biosynthesis. The polypeptide is 4-hydroxy-3-methylbut-2-enyl diphosphate reductase (Xylella fastidiosa (strain M12)).